Here is a 91-residue protein sequence, read N- to C-terminus: Probable Fe(2+)-trafficking protein (91 aa).

Belongs to the Fe(2+)-trafficking protein family.

Functionally, could be a mediator in iron transactions between iron acquisition and iron-requiring processes, such as synthesis and/or repair of Fe-S clusters in biosynthetic enzymes. This chain is Probable Fe(2+)-trafficking protein, found in Actinobacillus pleuropneumoniae serotype 5b (strain L20).